Consider the following 132-residue polypeptide: DNA-directed RNA polymerase subunit omega (132 aa).

This sequence belongs to the RNA polymerase subunit omega family. The RNAP catalytic core consists of 2 alpha, 1 beta, 1 beta' and 1 omega subunit. When a sigma factor is associated with the core the holoenzyme is formed, which can initiate transcription.

It catalyses the reaction RNA(n) + a ribonucleoside 5'-triphosphate = RNA(n+1) + diphosphate. Its function is as follows. Promotes RNA polymerase assembly. Latches the N- and C-terminal regions of the beta' subunit thereby facilitating its interaction with the beta and alpha subunits. The sequence is that of DNA-directed RNA polymerase subunit omega from Bartonella quintana (strain Toulouse) (Rochalimaea quintana).